The chain runs to 94 residues: Late cornified envelope-like proline-rich protein 1 (94 aa).

Disordered regions lie at residues 1–26 (MSSD…CEQK) and 47–94 (CPRE…PPPE). Positions 53–94 (PAPPKCPPCPSPSPSSCPPKPCAKPCPPKCPSSCPPPCPPPE) are enriched in pro residues.

Belongs to the cornifin (SPRR) family.

This is Late cornified envelope-like proline-rich protein 1 (LELP1) from Macaca fascicularis (Crab-eating macaque).